The sequence spans 61 residues: Photosystem II reaction center protein K (61 aa).

Residues 1–24 (MLNILSFIGICLNSFLYSSSFFVA) constitute a propeptide that is removed on maturation. The chain crosses the membrane as a helical span at residues 40 to 60 (MPVIPLFFFLLAFVWQAAVSF).

This sequence belongs to the PsbK family. As to quaternary structure, PSII is composed of 1 copy each of membrane proteins PsbA, PsbB, PsbC, PsbD, PsbE, PsbF, PsbH, PsbI, PsbJ, PsbK, PsbL, PsbM, PsbT, PsbX, PsbY, PsbZ, Psb30/Ycf12, at least 3 peripheral proteins of the oxygen-evolving complex and a large number of cofactors. It forms dimeric complexes.

Its subcellular location is the plastid. The protein resides in the chloroplast thylakoid membrane. Its function is as follows. One of the components of the core complex of photosystem II (PSII). PSII is a light-driven water:plastoquinone oxidoreductase that uses light energy to abstract electrons from H(2)O, generating O(2) and a proton gradient subsequently used for ATP formation. It consists of a core antenna complex that captures photons, and an electron transfer chain that converts photonic excitation into a charge separation. This Cucumis sativus (Cucumber) protein is Photosystem II reaction center protein K.